The following is a 290-amino-acid chain: Secreted chorismate mutase (290 aa).

A signal peptide spans 1–21 (MKLSVSIFVLLAVSAFGGGSA). The segment at 117 to 140 (VVLSRDTVLDKPVVGKGIFPIGRR) is KWL1-binding extensive loop region (ELR). Asparagine 159 and asparagine 208 each carry an N-linked (GlcNAc...) asparagine glycan.

In terms of assembly, homodimer. Forms a heterodimer with the host cytosolic chorismate mutase CM2. Interacts with the host kiwellin KWL1 which acts as a defense protein that protects maize from infection.

The protein resides in the secreted. Its subcellular location is the host cytoplasm. It is found in the host cytosol. It catalyses the reaction chorismate = prephenate. Its activity is regulated as follows. Contrary to classical chorismate mutases, CMU1 is not subject to allosteric regulation by tryptophan and tyrosine. Activity is decreased in a non-competitive and allosteric manner by the binding of the host defense kiwellin KWL1 which probably blocks substrate access to the active site of CMU1. Its function is as follows. Secreted chorismate mutase that is one component of a cocktail of effectors shaping the host metabolome and acting as virulence factors. The enzyme is taken up by plant cells, can spread to neighboring cells where it affects the biosynthesis of the plant immune signal salicylic acid by channelling chorismate into the phenylpropanoid pathway. Interferes with the activity of host cytosolic chorismate mutase CM2 through heterodimerization. This chain is Secreted chorismate mutase (CMU1), found in Mycosarcoma maydis (Corn smut fungus).